A 223-amino-acid polypeptide reads, in one-letter code: Serine/threonine/tyrosine-interacting protein (223 aa).

In terms of domain architecture, Tyrosine-protein phosphatase spans glutamate 28 to alanine 176. The short motif at phenylalanine 76–glutamine 78 is the Interaction with FBXW7 element. A phosphoserine mark is found at serine 184, serine 193, and serine 201. Residues glycine 197–glycine 223 are disordered.

This sequence belongs to the protein-tyrosine phosphatase family. Non-receptor class subfamily. As to quaternary structure, interacts with MAPK1; independently of MAPK1 phosphorylation status. Interacts with CARHSP1/Crhsp-24. Interacts (via FQQ motif) with FBXW7 isoforms 1 (via F-box domain) and 3 (via F-box domain); the interaction is direct and prevents FBXW7 interaction with SKP1, a component of the SCF(FBXW7) complex. Does not interact with FBXW7 isoform 2.

Its subcellular location is the nucleus. The protein resides in the cytoplasm. It is found in the cytosol. Functionally, catalytically inactive phosphatase. Acts as a nuclear anchor for MAPK1/MAPK3 (ERK1/ERK2). Modulates cell-fate decisions and cell migration by spatiotemporal regulation of MAPK1/MAPK3 (ERK1/ERK2). By binding to the F-box of FBXW7, prevents the assembly of FBXW7 into the SCF E3 ubiquitin-protein ligase complex, and thereby inhibits degradation of its substrates. Plays a role in spermatogenesis. In Homo sapiens (Human), this protein is Serine/threonine/tyrosine-interacting protein.